The chain runs to 212 residues: N-(5'-phosphoribosyl)anthranilate isomerase (212 aa).

Belongs to the TrpF family.

The enzyme catalyses N-(5-phospho-beta-D-ribosyl)anthranilate = 1-(2-carboxyphenylamino)-1-deoxy-D-ribulose 5-phosphate. The protein operates within amino-acid biosynthesis; L-tryptophan biosynthesis; L-tryptophan from chorismate: step 3/5. The sequence is that of N-(5'-phosphoribosyl)anthranilate isomerase from Myxococcus xanthus (strain DK1622).